We begin with the raw amino-acid sequence, 428 residues long: Folylpolyglutamate synthase (428 aa).

Residue 49-52 (GKGS) coordinates ATP. Serine 73 lines the Mg(2+) pocket. 2 residues coordinate (6R)-5,10-methylenetetrahydrofolyl-(gamma-L-Glu)n: phenylalanine 75 and arginine 82. 2 residues coordinate Mg(2+): glutamate 143 and histidine 170. Lysine 185 bears the N6-carboxylysine mark. Residues asparagine 264, arginine 300, and 313 to 316 (DGAH) each bind ATP. Serine 417 serves as a coordination point for (6R)-5,10-methylenetetrahydrofolyl-(gamma-L-Glu)n.

This sequence belongs to the folylpolyglutamate synthase family. In terms of assembly, monomer. The cofactor is Mg(2+).

It carries out the reaction (6S)-5,6,7,8-tetrahydrofolyl-(gamma-L-Glu)(n) + L-glutamate + ATP = (6S)-5,6,7,8-tetrahydrofolyl-(gamma-L-Glu)(n+1) + ADP + phosphate + H(+). The enzyme catalyses (6R)-5,10-methylenetetrahydrofolyl-(gamma-L-Glu)(n) + L-glutamate + ATP = (6R)-5,10-methylenetetrahydrofolyl-(gamma-L-Glu)(n+1) + ADP + phosphate + H(+). The catalysed reaction is 10-formyltetrahydrofolyl-(gamma-L-Glu)(n) + L-glutamate + ATP = 10-formyltetrahydrofolyl-(gamma-L-Glu)(n+1) + ADP + phosphate + H(+). Competitively inhibited by adenosine 5'-(3-thio)triphosphate and beta,gamma-methylene-ATP. Its function is as follows. Involved in the conversion of folates to polyglutamate derivatives, and likely functions in the retention of cellular folate pools. Catalyzes successive MgATP-dependent additions of glutamate to a pteroylmonoglutamate substrate, with a high preference for 5,10-methylenetetrahydrofolate (mTHF). Thus, metabolizes mTHF to the tetraglutamate derivative, but longer glutamate chain length products are not observed. Tetrahydrofolate (H4PteGlu) and 10-formyl-H4PteGlu are poorer folate substrates. In contrast to E.coli FolC, this enzyme does not display dihydrofolate synthase activity. This chain is Folylpolyglutamate synthase, found in Lacticaseibacillus casei (Lactobacillus casei).